A 320-amino-acid chain; its full sequence is o-succinylbenzoate synthase (320 aa).

K133 acts as the Proton donor in catalysis. 3 residues coordinate Mg(2+): D161, E190, and D213. Catalysis depends on K235, which acts as the Proton acceptor.

It belongs to the mandelate racemase/muconate lactonizing enzyme family. MenC type 1 subfamily. The cofactor is a divalent metal cation.

It catalyses the reaction (1R,6R)-6-hydroxy-2-succinyl-cyclohexa-2,4-diene-1-carboxylate = 2-succinylbenzoate + H2O. The protein operates within quinol/quinone metabolism; 1,4-dihydroxy-2-naphthoate biosynthesis; 1,4-dihydroxy-2-naphthoate from chorismate: step 4/7. Its pathway is quinol/quinone metabolism; menaquinone biosynthesis. Its function is as follows. Converts 2-succinyl-6-hydroxy-2,4-cyclohexadiene-1-carboxylate (SHCHC) to 2-succinylbenzoate (OSB). The polypeptide is o-succinylbenzoate synthase (Salmonella dublin (strain CT_02021853)).